A 223-amino-acid polypeptide reads, in one-letter code: Coiled-coil domain-containing protein 124 (223 aa).

Residues 1 to 126 are disordered; the sequence is MPKKFQGENT…AEKAKSHLEV (126 aa). The stretch at 15-82 forms a coiled coil; sequence ARARRAEAKA…LLEEEDSKLK (68 aa). Basic and acidic residues-rich tracts occupy residues 18-74 and 99-126; these read RRAE…QRLL and QIEE…HLEV. Phosphoserine occurs at positions 141 and 194.

It belongs to the CCDC124 family. As to quaternary structure, associates with translationally inactive ribosomes in the nonrotated state. Interacts with RASGEF1B.

It is found in the cytoplasm. It localises to the cytoskeleton. The protein resides in the microtubule organizing center. The protein localises to the centrosome. Its subcellular location is the midbody. Ribosome-binding protein involved in ribosome hibernation: associates with translationally inactive ribosomes and stabilizes the nonrotated conformation of the 80S ribosome, thereby promoting ribosome preservation and storage. Also required for proper progression of late cytokinetic stages. The protein is Coiled-coil domain-containing protein 124 (CCDC124) of Bos taurus (Bovine).